Consider the following 272-residue polypeptide: HMP-PP phosphatase (272 aa).

Asp-8 functions as the Nucleophile in the catalytic mechanism. The Mg(2+) site is built by Asp-8, Asp-10, and Asp-212.

This sequence belongs to the HAD-like hydrolase superfamily. Cof family. Mg(2+) is required as a cofactor.

The enzyme catalyses 4-amino-2-methyl-5-(diphosphooxymethyl)pyrimidine + H2O = 4-amino-2-methyl-5-(phosphooxymethyl)pyrimidine + phosphate + H(+). In terms of biological role, catalyzes the hydrolysis of 4-amino-2-methyl-5-hydroxymethylpyrimidine pyrophosphate (HMP-PP) to 4-amino-2-methyl-5-hydroxymethylpyrimidine phosphate (HMP-P). The sequence is that of HMP-PP phosphatase from Escherichia coli O8 (strain IAI1).